Reading from the N-terminus, the 222-residue chain is Cyclin-dependent kinase inhibitor 3 (222 aa).

The segment at K68 to V101 is disordered. Over residues G85–V95 the composition is skewed to basic and acidic residues.

Belongs to the CDI family. ICK/KRP subfamily. Specifically interacts with CDKA-1, but not with CDKB1-1.

The protein resides in the nucleus. Its subcellular location is the nucleoplasm. In terms of biological role, binds and inhibits CYCD2-1/CDKA-1 complex kinase activity. May target specifically CDKA-1. This chain is Cyclin-dependent kinase inhibitor 3 (KRP3), found in Arabidopsis thaliana (Mouse-ear cress).